The primary structure comprises 401 residues: Tyrosine--tRNA ligase (401 aa).

Positions 42-51 match the 'HIGH' region motif; it reads PTAPDLHLGH. A 'KMSKS' region motif is present at residues 226–230; sequence KMSKS. Lysine 229 lines the ATP pocket. The 62-residue stretch at 336 to 397 folds into the S4 RNA-binding domain; that stretch reads IALAQLLKQI…GKRRIAKLSI (62 aa).

It belongs to the class-I aminoacyl-tRNA synthetase family. TyrS type 2 subfamily. Homodimer.

The protein resides in the cytoplasm. The catalysed reaction is tRNA(Tyr) + L-tyrosine + ATP = L-tyrosyl-tRNA(Tyr) + AMP + diphosphate + H(+). Functionally, catalyzes the attachment of tyrosine to tRNA(Tyr) in a two-step reaction: tyrosine is first activated by ATP to form Tyr-AMP and then transferred to the acceptor end of tRNA(Tyr). The protein is Tyrosine--tRNA ligase of Legionella pneumophila subsp. pneumophila (strain Philadelphia 1 / ATCC 33152 / DSM 7513).